We begin with the raw amino-acid sequence, 225 residues long: NAD(P)H-quinone oxidoreductase subunit K, chloroplastic (225 aa).

[4Fe-4S] cluster-binding residues include Cys-43, Cys-44, Cys-108, and Cys-139.

It belongs to the complex I 20 kDa subunit family. As to quaternary structure, NDH is composed of at least 16 different subunits, 5 of which are encoded in the nucleus. [4Fe-4S] cluster is required as a cofactor.

The protein resides in the plastid. Its subcellular location is the chloroplast thylakoid membrane. The enzyme catalyses a plastoquinone + NADH + (n+1) H(+)(in) = a plastoquinol + NAD(+) + n H(+)(out). It carries out the reaction a plastoquinone + NADPH + (n+1) H(+)(in) = a plastoquinol + NADP(+) + n H(+)(out). NDH shuttles electrons from NAD(P)H:plastoquinone, via FMN and iron-sulfur (Fe-S) centers, to quinones in the photosynthetic chain and possibly in a chloroplast respiratory chain. The immediate electron acceptor for the enzyme in this species is believed to be plastoquinone. Couples the redox reaction to proton translocation, and thus conserves the redox energy in a proton gradient. This is NAD(P)H-quinone oxidoreductase subunit K, chloroplastic from Illicium oligandrum (Star anise).